The sequence spans 103 residues: Flagellar hook-basal body complex protein FliE (103 aa).

This sequence belongs to the FliE family.

It is found in the bacterial flagellum basal body. The chain is Flagellar hook-basal body complex protein FliE from Erwinia tasmaniensis (strain DSM 17950 / CFBP 7177 / CIP 109463 / NCPPB 4357 / Et1/99).